The following is a 532-amino-acid chain: MEVQRNFFIFAFLFVSFLLWQAWQSQMFLNKKTNEKIDPIFHFIDVKKNKKKIFIKNDVISLVVNMYGGDVEEASLLAYKDTLYSSRPFKLLETGSDFIYQAQSGLIGKDGPDSSINDSRPLYSANKNFFVLGPNEKELRVPIKWLSKNGVIYKKTFILKPNRYDVQIEYDVYNPSKESLNMNIFGQIKQTINLPKKRNVYSGNFALQTFRGAAYSSDDNKYEKYKFDMIANNKNLHIMTESGWIAMLQQYFAVAWIPDNLGKNTIYTSSLDHDTAVIGYKSPIINIPPNSRSIIKSKLWIGPEIQKEMKLVAPNLDLTVDYGWLWFLSQPLFKLLTILYSIIGNWGFSIILITFIMRGLTYPLTKAQYISMAKMRALQPKIQEIKEKFSKDKQRISQEMILLYKKEKINPLGGFLPIFIQMPIFLSLYYMLIGSVELRHAPFLLWIHDLSSQDPYYVLPVIMGLTMFFIQKISSTNHISDPLQKKIMNFMPVIFTAFFLWFPSGLVLYYIISNLVTIIQQKFILSNLEKNR.

The next 5 membrane-spanning stretches (helical) occupy residues 7–27 (FFIFAFLFVSFLLWQAWQSQM), 336–356 (LTILYSIIGNWGFSIILITFI), 413–433 (GGFLPIFIQMPIFLSLYYMLI), 450–470 (LSSQDPYYVLPVIMGLTMFFI), and 492–512 (PVIFTAFFLWFPSGLVLYYII).

Belongs to the OXA1/ALB3/YidC family. Type 1 subfamily. As to quaternary structure, interacts with the Sec translocase complex via SecD. Specifically interacts with transmembrane segments of nascent integral membrane proteins during membrane integration.

It is found in the cell membrane. In terms of biological role, required for the insertion and/or proper folding and/or complex formation of integral membrane proteins into the membrane. Involved in integration of membrane proteins that insert both dependently and independently of the Sec translocase complex, as well as at least some lipoproteins. Aids folding of multispanning membrane proteins. The polypeptide is Membrane protein insertase YidC (Buchnera aphidicola subsp. Acyrthosiphon pisum (strain Tuc7)).